A 159-amino-acid polypeptide reads, in one-letter code: NADH-quinone oxidoreductase subunit B (159 aa).

Residues Cys-36, Cys-37, Cys-102, and Cys-132 each contribute to the [4Fe-4S] cluster site.

The protein belongs to the complex I 20 kDa subunit family. NDH-1 is composed of 14 different subunits. Subunits NuoB, C, D, E, F, and G constitute the peripheral sector of the complex. The cofactor is [4Fe-4S] cluster.

Its subcellular location is the cell inner membrane. The enzyme catalyses a quinone + NADH + 5 H(+)(in) = a quinol + NAD(+) + 4 H(+)(out). Functionally, NDH-1 shuttles electrons from NADH, via FMN and iron-sulfur (Fe-S) centers, to quinones in the respiratory chain. Couples the redox reaction to proton translocation (for every two electrons transferred, four hydrogen ions are translocated across the cytoplasmic membrane), and thus conserves the redox energy in a proton gradient. This Delftia acidovorans (strain DSM 14801 / SPH-1) protein is NADH-quinone oxidoreductase subunit B.